The primary structure comprises 543 residues: Carboxypeptidase Y homolog A (543 aa).

Positions 1–17 are cleaved as a signal peptide; that stretch reads MKVATSALLVGAVSASV. Residues 18 to 128 constitute a propeptide that is removed on maturation; sequence GPQQQVLKFP…KLENYSMRTK (111 aa). N-linked (GlcNAc...) asparagine glycans are attached at residues asparagine 122 and asparagine 213. Cystine bridges form between cysteine 182–cysteine 421, cysteine 316–cysteine 330, cysteine 340–cysteine 363, cysteine 347–cysteine 356, and cysteine 385–cysteine 391. The active site involves serine 269. The active site involves aspartate 460. A glycan (N-linked (GlcNAc...) asparagine) is linked at asparagine 508. Histidine 519 is a catalytic residue.

The protein belongs to the peptidase S10 family.

It localises to the vacuole. It catalyses the reaction Release of a C-terminal amino acid with broad specificity.. Functionally, vacuolar carboxypeptidase involved in degradation of small peptides. Digests preferentially peptides containing an aliphatic or hydrophobic residue in P1' position, as well as methionine, leucine or phenylalanine in P1 position of ester substrate. The protein is Carboxypeptidase Y homolog A (CPYA) of Leptosphaeria maculans (strain JN3 / isolate v23.1.3 / race Av1-4-5-6-7-8) (Blackleg fungus).